Reading from the N-terminus, the 216-residue chain is Octanoyltransferase (216 aa).

The BPL/LPL catalytic domain maps to 31–205; the sequence is STTRDEVWLV…ELVTLLDYEQ (175 aa). Residues 70 to 77, 137 to 139, and 150 to 152 contribute to the substrate site; these read RGGQVTYH, SLG, and GLA. The active-site Acyl-thioester intermediate is the Cys-168.

The protein belongs to the LipB family.

The protein localises to the cytoplasm. The enzyme catalyses octanoyl-[ACP] + L-lysyl-[protein] = N(6)-octanoyl-L-lysyl-[protein] + holo-[ACP] + H(+). It functions in the pathway protein modification; protein lipoylation via endogenous pathway; protein N(6)-(lipoyl)lysine from octanoyl-[acyl-carrier-protein]: step 1/2. In terms of biological role, catalyzes the transfer of endogenously produced octanoic acid from octanoyl-acyl-carrier-protein onto the lipoyl domains of lipoate-dependent enzymes. Lipoyl-ACP can also act as a substrate although octanoyl-ACP is likely to be the physiological substrate. The protein is Octanoyltransferase of Vibrio cholerae serotype O1 (strain ATCC 39541 / Classical Ogawa 395 / O395).